The primary structure comprises 432 residues: Trigger factor (432 aa).

Residues Gly-163–Pro-248 enclose the PPIase FKBP-type domain.

Belongs to the FKBP-type PPIase family. Tig subfamily.

The protein resides in the cytoplasm. The catalysed reaction is [protein]-peptidylproline (omega=180) = [protein]-peptidylproline (omega=0). Involved in protein export. Acts as a chaperone by maintaining the newly synthesized protein in an open conformation. Functions as a peptidyl-prolyl cis-trans isomerase. The protein is Trigger factor of Thermoanaerobacter pseudethanolicus (strain ATCC 33223 / 39E) (Clostridium thermohydrosulfuricum).